The sequence spans 269 residues: F-box protein At5g52880 (269 aa).

The region spanning 109 to 155 (DIDIPSLPQDILIHIFSFLEISSLVSSAQVSRSWNQATHENSLWQSQ) is the F-box domain.

In Arabidopsis thaliana (Mouse-ear cress), this protein is F-box protein At5g52880.